The chain runs to 1048 residues: Anguibactin system regulator (1048 aa).

The region spanning 965 to 1039 is the Carrier domain; it reads PIITASEDRV…AFAIIMDRCR (75 aa).

It belongs to the ATP-dependent AMP-binding enzyme family.

Its pathway is siderophore biosynthesis; anguibactin biosynthesis. Functionally, bifunctional protein that plays an essential role in virulence. Plays a role in both the production of the siderophore anguibactin and the regulation of iron transport genes. This Vibrio anguillarum (Listonella anguillarum) protein is Anguibactin system regulator (angR).